The chain runs to 755 residues: MSASSLLDKQCDHFSTKIVDLIMVDKADELDRRVAAAFSEREASRERRISQISGECNAGLACKRLADGRFPEISAGQRVAVLSAYIYVGEEILRWILEPEASVRTRVSGLVAIDLAPSCMDISRAQLLQTMNLLSGKRCAPSDLSHFVAISISETARSRTLQMAPYEEGSLKSVTGFTVIIEEAVPFDMVAYGRNLMLKASAGSFPTIDLLYDYRLFLDKCSDSGRIGFFPEDVPRPKVAVIGAGISGLVVASELLHAGVDDVTIYEAGDRVGGKLWSHAFKDAPGVVAEMGAMRFPPAASCLFFFLERYGLSSMRPFPNPGTVDTDLVYEGCRYMWKAGQQPPKLFHRVYSGWHAFLKDGFLEGDIVLASPDAITEALKSGDIRRAHDSWQIWLNRFGRESFSSAIERIFLGTHPPGGETWSFPHDWDLFKLMGIGSGGFGPVFESGFTEILRLVINGYEENQRMCSEGISELPRRIASQVVNGVSVSQRIRHVQVRAIEKEKTKIKIRLKSGISELYDKVVVTSGLANIQLRHCLTCDTTIFRAPVNQAVDNSHMTGSSKLFLLTERKFWFDHMLPSCVLMDGFAKAVYCLDYEPQDPNGKGLVLISYTWEDDSHKLLAVPDKKERLCLLRDAISKSFPVFAQHLVPACADYDQNVVQHDWLTDENAGGRFKLNRRGEDFYSEELFFQALDTTNDTGVYLAGCSCSFTGGWVEGAIQTACNAVCAIIHNCGGILAKDNPLKHPWKRYNYRNRN.

The FMN site is built by Ser247, Glu267, Lys275, and Arg295. A substrate-binding site is contributed by Arg295.

It belongs to the tryptophan 2-monooxygenase family. Requires FMN as cofactor.

It catalyses the reaction L-tryptophan + O2 = indole-3-acetamide + CO2 + H2O. It functions in the pathway plant hormone metabolism; auxin biosynthesis. This is Tryptophan 2-monooxygenase (iaaM) from Agrobacterium vitis (Rhizobium vitis).